A 353-amino-acid chain; its full sequence is Uroporphyrinogen decarboxylase (353 aa).

Substrate-binding positions include 30-34 (RQAGR), Asp-79, Tyr-154, Ser-209, and His-332.

It belongs to the uroporphyrinogen decarboxylase family. As to quaternary structure, homodimer.

The protein localises to the cytoplasm. It carries out the reaction uroporphyrinogen III + 4 H(+) = coproporphyrinogen III + 4 CO2. Its pathway is porphyrin-containing compound metabolism; protoporphyrin-IX biosynthesis; coproporphyrinogen-III from 5-aminolevulinate: step 4/4. Functionally, catalyzes the decarboxylation of four acetate groups of uroporphyrinogen-III to yield coproporphyrinogen-III. The sequence is that of Uroporphyrinogen decarboxylase from Mycolicibacterium smegmatis (strain ATCC 700084 / mc(2)155) (Mycobacterium smegmatis).